Consider the following 284-residue polypeptide: Putative ABC transporter ATP-binding protein sll0385 (284 aa).

In terms of domain architecture, ABC transporter spans 51 to 278; the sequence is IRVRELSFAY…QTLMESHGLE (228 aa). ATP is bound at residue 84 to 91; the sequence is GHNGCGKT.

Belongs to the ABC transporter superfamily.

It localises to the cell inner membrane. Its function is as follows. Probably part of an ABC transporter complex. Responsible for energy coupling to the transport system. In Synechocystis sp. (strain ATCC 27184 / PCC 6803 / Kazusa), this protein is Putative ABC transporter ATP-binding protein sll0385.